We begin with the raw amino-acid sequence, 25 residues long: Secapin-1 (25 aa).

An intrachain disulfide couples Cys9 to Cys20.

Expressed by the venom gland.

It localises to the secreted. Functionally, serine protease inhibitor which exhibits antifibrinolytic, antielastolytic and antimicrobial activities. Displays antimicrobial activity against bacteria and fungi. Likely functions in the innate immune response to microbial infection and possibly in the venom, as an antifibrinolytic agent. The sequence is that of Secapin-1 from Apis mellifera (Honeybee).